Here is a 141-residue protein sequence, read N- to C-terminus: Large ribosomal subunit protein uL11 (141 aa).

This sequence belongs to the universal ribosomal protein uL11 family. As to quaternary structure, part of the ribosomal stalk of the 50S ribosomal subunit. Interacts with L10 and the large rRNA to form the base of the stalk. L10 forms an elongated spine to which L12 dimers bind in a sequential fashion forming a multimeric L10(L12)X complex. Post-translationally, one or more lysine residues are methylated.

Forms part of the ribosomal stalk which helps the ribosome interact with GTP-bound translation factors. This Geobacter sulfurreducens (strain ATCC 51573 / DSM 12127 / PCA) protein is Large ribosomal subunit protein uL11.